Here is a 438-residue protein sequence, read N- to C-terminus: Coenzyme A disulfide reductase (438 aa).

Residue 8 to 33 (GAVAGGATCASQIRRLDKESDIIIFE) participates in FAD binding. 5 residues coordinate substrate: Thr-15, Gln-19, Arg-22, Ser-39, and Asn-42. Cys-43 serves as the catalytic Nucleophile. Cys-43 functions as the Redox-active in the catalytic mechanism. Residue Lys-71 coordinates substrate. Residue 151-166 (VLVVGAGYVSLEVLEN) coordinates NADP(+). 267–277 (TNVPNIYAIGD) contacts FAD. A substrate-binding site is contributed by His-299. Tyr-419 contributes to the FAD binding site. Lys-427 contacts substrate.

This sequence belongs to the class-III pyridine nucleotide-disulfide oxidoreductase family. Homodimer. It depends on FAD as a cofactor.

The enzyme catalyses NADP(+) + 2 CoA = CoA-disulfide + NADPH + H(+). Functionally, catalyzes specifically the NADPH-dependent reduction of coenzyme A disulfide. In Staphylococcus aureus (strain bovine RF122 / ET3-1), this protein is Coenzyme A disulfide reductase.